The chain runs to 600 residues: 69 kDa paraflagellar rod protein (600 aa).

Positions 335–355 (DKQDEAWRRIQELERVLQRLG) are calmodulin-binding.

In terms of assembly, heterodimer of a 69 kDa and a 73 kDa protein.

It localises to the cell projection. The protein resides in the cilium. It is found in the flagellum. The protein localises to the cytoplasm. Its subcellular location is the cytoskeleton. In terms of biological role, major component of the paraflagellar rod (PFR). The PFR is a highly ordered lattices of fibrous proteins that are located inside the flagellum and assume a fixed orientation with respect to the microtubular axoneme. The chain is 69 kDa paraflagellar rod protein (PFRA) from Trypanosoma brucei brucei.